The following is a 98-amino-acid chain: Small ribosomal subunit protein bS6 (98 aa).

Belongs to the bacterial ribosomal protein bS6 family.

Its function is as follows. Binds together with bS18 to 16S ribosomal RNA. The chain is Small ribosomal subunit protein bS6 from Staphylococcus haemolyticus (strain JCSC1435).